A 118-amino-acid chain; its full sequence is MLDSLKQKKNFQRIKMRIKTGDLVKVINGKEKGKTGEVLKTIPLENRVVVKGINLRTKHVKPTQEGETGRILTEEASLHASNVMFFSKEKNLTSKIEYFIDKEGVKKRRLKKTGEVID.

It belongs to the universal ribosomal protein uL24 family. As to quaternary structure, part of the 50S ribosomal subunit.

Its function is as follows. One of two assembly initiator proteins, it binds directly to the 5'-end of the 23S rRNA, where it nucleates assembly of the 50S subunit. Functionally, one of the proteins that surrounds the polypeptide exit tunnel on the outside of the subunit. The protein is Large ribosomal subunit protein uL24 of Prochlorococcus marinus (strain MIT 9301).